We begin with the raw amino-acid sequence, 76 residues long: Large ribosomal subunit protein bL31 (76 aa).

The protein belongs to the bacterial ribosomal protein bL31 family. Type A subfamily. Part of the 50S ribosomal subunit.

Functionally, binds the 23S rRNA. The sequence is that of Large ribosomal subunit protein bL31 from Beijerinckia indica subsp. indica (strain ATCC 9039 / DSM 1715 / NCIMB 8712).